The following is an 895-amino-acid chain: Pyruvate dehydrogenase E1 component (895 aa).

The segment at M1–Q20 is disordered.

As to quaternary structure, homodimer. Part of the PDH complex, consisting of multiple copies of pyruvate dehydrogenase (E1), dihydrolipoamide acetyltransferase (E2) and lipoamide dehydrogenase (E3). The cofactor is thiamine diphosphate.

It catalyses the reaction N(6)-[(R)-lipoyl]-L-lysyl-[protein] + pyruvate + H(+) = N(6)-[(R)-S(8)-acetyldihydrolipoyl]-L-lysyl-[protein] + CO2. Functionally, component of the pyruvate dehydrogenase (PDH) complex, that catalyzes the overall conversion of pyruvate to acetyl-CoA and CO(2). In Cupriavidus necator (strain ATCC 17699 / DSM 428 / KCTC 22496 / NCIMB 10442 / H16 / Stanier 337) (Ralstonia eutropha), this protein is Pyruvate dehydrogenase E1 component (pdhA).